The primary structure comprises 384 residues: MLIVADENIPLLDSFFGDIGEIRRVNGRTLTPDQVKDADILLVRSVTRVDRQLLEGTRVRFVGTATIGTDHIDQTWLQEQGIGFAAAPGCNAVSVAEYVLSVLSLYAEKRGIEDWSSLTVGIVGVGNVGGELARMLERLDFTVKLCDPPRQEAEEERAEEFVPLAEALECDVVTLHTPLTRTGDHPTNRMIAGSELAALGQDQLLINAGRGEVIDGEALLARLQQADAPTVVLDVWEHEPRINPDLLDRVWLATPHIAGYSLEGKMQGTEMIYQALCRYLGLPVRKKAGQFLPEPALSKVSFTSSADEDEAVQVALRACYDPRRDDARLRLTMRGNPEERAQAFDRLRRDYPVRRECSSLKVQLKGSSKSIQDSFRAIGFKLKI.

Substrate-binding residues include Ser-45 and Thr-66. The NAD(+) site is built by Asp-147 and Thr-177. Arg-210 is an active-site residue. Asp-234 contacts NAD(+). Glu-239 is a catalytic residue. His-256 (proton donor) is an active-site residue. Gly-259 contacts NAD(+). A substrate-binding site is contributed by Tyr-260.

It belongs to the D-isomer specific 2-hydroxyacid dehydrogenase family. PdxB subfamily. Homodimer.

The protein resides in the cytoplasm. The enzyme catalyses 4-phospho-D-erythronate + NAD(+) = (R)-3-hydroxy-2-oxo-4-phosphooxybutanoate + NADH + H(+). It participates in cofactor biosynthesis; pyridoxine 5'-phosphate biosynthesis; pyridoxine 5'-phosphate from D-erythrose 4-phosphate: step 2/5. Catalyzes the oxidation of erythronate-4-phosphate to 3-hydroxy-2-oxo-4-phosphonooxybutanoate. In Marinobacter nauticus (strain ATCC 700491 / DSM 11845 / VT8) (Marinobacter aquaeolei), this protein is Erythronate-4-phosphate dehydrogenase.